Consider the following 474-residue polypeptide: tRNA-2-methylthio-N(6)-dimethylallyladenosine synthase (474 aa).

Residues 3-120 (KKLHIKTWGC…LPEMINSVRG (118 aa)) enclose the MTTase N-terminal domain. The [4Fe-4S] cluster site is built by cysteine 12, cysteine 49, cysteine 83, cysteine 157, cysteine 161, and cysteine 164. The 233-residue stretch at 143–375 (RADGPTAFVS…QDRINQQTTA (233 aa)) folds into the Radical SAM core domain. The region spanning 378–441 (RRKLGTVQRI…ANSLRGMLLR (64 aa)) is the TRAM domain.

It belongs to the methylthiotransferase family. MiaB subfamily. In terms of assembly, monomer. The cofactor is [4Fe-4S] cluster.

The protein localises to the cytoplasm. The enzyme catalyses N(6)-dimethylallyladenosine(37) in tRNA + (sulfur carrier)-SH + AH2 + 2 S-adenosyl-L-methionine = 2-methylsulfanyl-N(6)-dimethylallyladenosine(37) in tRNA + (sulfur carrier)-H + 5'-deoxyadenosine + L-methionine + A + S-adenosyl-L-homocysteine + 2 H(+). In terms of biological role, catalyzes the methylthiolation of N6-(dimethylallyl)adenosine (i(6)A), leading to the formation of 2-methylthio-N6-(dimethylallyl)adenosine (ms(2)i(6)A) at position 37 in tRNAs that read codons beginning with uridine. The chain is tRNA-2-methylthio-N(6)-dimethylallyladenosine synthase from Erwinia tasmaniensis (strain DSM 17950 / CFBP 7177 / CIP 109463 / NCPPB 4357 / Et1/99).